The sequence spans 127 residues: Transcription antitermination protein NusB (127 aa).

Belongs to the NusB family.

Its function is as follows. Involved in transcription antitermination. Required for transcription of ribosomal RNA (rRNA) genes. Binds specifically to the boxA antiterminator sequence of the ribosomal RNA (rrn) operons. This chain is Transcription antitermination protein NusB, found in Lysinibacillus sphaericus (strain C3-41).